The sequence spans 1118 residues: Cytospin-A (1118 aa).

4 disordered regions span residues 1–63 (MKKA…AGMA), 75–176 (KKST…NQIS), 294–324 (SLSP…GSVE), and 359–391 (SSDD…NASE). Residues 80 to 90 (SSAAPSAPAPA) are compositionally biased toward low complexity. The span at 93–117 (ISENKSKISTGTSSSAKRSTSAGNK) shows a compositional bias: polar residues. Residues 120–131 (SSTRERLRERTR) are compositionally biased toward basic and acidic residues. Positions 133 to 145 (NQSKKLPSVSQGA) are enriched in polar residues. Residues 158–171 (TAAEGDIRMSKSKS) are compositionally biased toward basic and acidic residues. Positions 168–281 (KSKSDNQISD…LNALGFSLEQ (114 aa)) form a coiled coil. The span at 294–304 (SLSPEITPGNQ) shows a compositional bias: polar residues. Positions 359-373 (SSDDALDAPSSSESE) are enriched in low complexity. Phosphoserine occurs at positions 385, 386, and 390. 2 coiled-coil regions span residues 395–450 (ACLT…MESL) and 488–808 (RYME…RGRV). Phosphoserine occurs at positions 869, 882, and 888. Residues 921–999 (TSSTSRPASL…STRSRIREER (79 aa)) are disordered. The segment covering 947–957 (RSSEEMKRDIS) has biased composition (basic and acidic residues). Low complexity predominate over residues 972-992 (TTSPQLSLSSSPTASVTPSTR). The 106-residue stretch at 1012-1117 (GSKRNALLKW…YVTAIYKYFE (106 aa)) folds into the Calponin-homology (CH) domain.

This sequence belongs to the cytospin-A family. In terms of assembly, may interact with both microtubules and actin cytoskeleton.

Its subcellular location is the cytoplasm. The protein resides in the cytoskeleton. The protein localises to the spindle. It localises to the cell junction. It is found in the gap junction. Its function is as follows. Involved in cytokinesis and spindle organization. May play a role in actin cytoskeleton organization and microtubule stabilization and hence required for proper cell adhesion and migration. In Mus musculus (Mouse), this protein is Cytospin-A (Specc1l).